The sequence spans 155 residues: DNA gyrase inhibitor (155 aa).

This sequence belongs to the DNA gyrase inhibitor family. In terms of assembly, interacts with DNA gyrase.

It localises to the cytoplasm. In terms of biological role, inhibits the supercoiling activity of DNA gyrase. Acts by inhibiting DNA gyrase at an early step, prior to (or at the step of) binding of DNA by the gyrase. It protects cells against toxins that target DNA gyrase, by inhibiting activity of these toxins and reducing the formation of lethal double-strand breaks in the cell. The chain is DNA gyrase inhibitor from Citrobacter koseri (strain ATCC BAA-895 / CDC 4225-83 / SGSC4696).